The primary structure comprises 492 residues: N-succinylglutamate 5-semialdehyde dehydrogenase (492 aa).

NAD(+) is bound at residue 220–225 (GSANTG). Residues glutamate 243 and cysteine 277 contribute to the active site.

It belongs to the aldehyde dehydrogenase family. AstD subfamily.

It carries out the reaction N-succinyl-L-glutamate 5-semialdehyde + NAD(+) + H2O = N-succinyl-L-glutamate + NADH + 2 H(+). The protein operates within amino-acid degradation; L-arginine degradation via AST pathway; L-glutamate and succinate from L-arginine: step 4/5. Functionally, catalyzes the NAD-dependent reduction of succinylglutamate semialdehyde into succinylglutamate. In Escherichia coli O17:K52:H18 (strain UMN026 / ExPEC), this protein is N-succinylglutamate 5-semialdehyde dehydrogenase.